Consider the following 355-residue polypeptide: Probable nitronate monooxygenase (355 aa).

FMN contacts are provided by residues asparagine 71, glutamine 175, glycine 180, glycine 218, and glutamine 237 to threonine 240.

This sequence belongs to the nitronate monooxygenase family. NMO class I subfamily. It depends on FMN as a cofactor.

It carries out the reaction 3 propionate 3-nitronate + 3 O2 + H2O = 3 3-oxopropanoate + 2 nitrate + nitrite + H2O2 + 3 H(+). Functionally, nitronate monooxygenase that uses molecular oxygen to catalyze the oxidative denitrification of alkyl nitronates. Acts on propionate 3-nitronate (P3N), the presumed physiological substrate. Probably functions in the detoxification of P3N, a metabolic poison produced by plants and fungi as a defense mechanism. This is Probable nitronate monooxygenase from Staphylococcus aureus (strain MRSA252).